A 60-amino-acid polypeptide reads, in one-letter code: Mastoparan-VT1 (60 aa).

A signal peptide spans 1 to 25 (MKNTILILFTAFIALLGFFGMSAEA). Positions 26 to 45 (LADLKADPLAGPNPDADPEA) are excised as a propeptide. AXPX repeat units lie at residues 31-34 (ADPL), 35-38 (AGPN), and 41-44 (ADPE). Residue Leu59 is modified to Leucine amide.

The protein belongs to the MCD family. Mastoparan subfamily. As to expression, expressed by the venom gland.

The protein localises to the secreted. Antimicrobial peptide with activities against Gram-negative and Gram-positive bacteria and the fungi C.albicans and C.parapsilosis. Exhibits little hemolytic activity against washed human erythrocytes. Also acts as a mast cell degranulating peptide. Its mast cell degranulation activity may be related to the activation of G-protein coupled receptors in mast cells as well as interaction with other proteins located in cell endosomal membranes in the mast cells. Functionally, antimicrobial peptide with activities against Gram-negative and Gram-positive bacteria and the fungi C.albicans and C.parapsilosis. Exhibits little hemolytic activity against washed human erythrocytes. Also acts as a mast cell degranulating peptide. This is Mastoparan-VT1 from Vespa tropica (Greater banded hornet).